The following is a 225-amino-acid chain: Cytidylate kinase (225 aa).

10 to 18 contributes to the ATP binding site; that stretch reads GPASSGKST.

This sequence belongs to the cytidylate kinase family. Type 1 subfamily.

It is found in the cytoplasm. The enzyme catalyses CMP + ATP = CDP + ADP. It catalyses the reaction dCMP + ATP = dCDP + ADP. The protein is Cytidylate kinase of Streptococcus sanguinis (strain SK36).